The following is a 410-amino-acid chain: Protein LTV1 homolog (410 aa).

Disordered regions lie at residues 142–165 and 325–378; these read VYRS…DEMY and EMDI…ARKL. 2 stretches are compositionally biased toward acidic residues: residues 151–165 and 325–345; these read DSEE…DEMY and EMDI…DDDK. The segment covering 357–366 has biased composition (basic and acidic residues); it reads PKNETPEQRS. Residues 363-389 are a coiled coil; sequence EQRSLRKKAVKEARKLRRVEKKANKTM. Positions 367 to 378 are enriched in basic residues; the sequence is LRKKAVKEARKL.

It belongs to the LTV1 family.

This chain is Protein LTV1 homolog, found in Caenorhabditis elegans.